A 642-amino-acid chain; its full sequence is tRNA uridine 5-carboxymethylaminomethyl modification enzyme MnmG (642 aa).

FAD-binding positions include 12–17, Val-124, and Ser-179; that span reads GAGHAG. Residue 272–286 participates in NAD(+) binding; the sequence is GPRYCPSIEDKITRF. Gln-369 serves as a coordination point for FAD.

The protein belongs to the MnmG family. Homodimer. Heterotetramer of two MnmE and two MnmG subunits. FAD is required as a cofactor.

It is found in the cytoplasm. In terms of biological role, NAD-binding protein involved in the addition of a carboxymethylaminomethyl (cmnm) group at the wobble position (U34) of certain tRNAs, forming tRNA-cmnm(5)s(2)U34. This is tRNA uridine 5-carboxymethylaminomethyl modification enzyme MnmG from Bdellovibrio bacteriovorus (strain ATCC 15356 / DSM 50701 / NCIMB 9529 / HD100).